We begin with the raw amino-acid sequence, 490 residues long: One cut domain family member 3 (490 aa).

Disordered stretches follow at residues 130–155, 193–213, and 287–316; these read GAHG…QRLA, LSPL…PPPP, and HGPH…AAAE. A compositionally biased stretch (pro residues) spans 143-152; the sequence is ATAPPPPPPQ. A compositionally biased stretch (gly residues) spans 290–311; it reads HSGGGGPGGGGGAGGGSGGPGA. The segment at residues 309 to 395 is a DNA-binding region (CUT); it reads PGAGAAAEEI…QRMSALRLAA (87 aa). Residues 411-470 constitute a DNA-binding region (homeobox); it reads PKKQRLVFTDLQRRTLIAIFKENKRPSKEMQATISQQLGLELNTVSNFFMNARRRCMNRW.

It belongs to the CUT homeobox family. Specifically expressed in brain, stomach and gut. Within the gut, expressed only in duodenum and jejunum.

It localises to the nucleus. Its function is as follows. Transcriptional activator. Binds the consensus DNA sequence 5'-DHWATTGAYTWWD-3' on a variety of gene promoters such as those of HNF3B and TTR. This Mus musculus (Mouse) protein is One cut domain family member 3 (Onecut3).